The following is a 372-amino-acid chain: Flap endonuclease 1 (372 aa).

The interval 1–105 (MGVKGLNQLI…GELEKRLLRR (105 aa)) is N-domain. D34 serves as a coordination point for Mg(2+). The DNA site is built by R47 and R71. Mg(2+) is bound by residues D87, E159, E161, D180, and D182. An I-domain region spans residues 123–254 (EVLKFEKRLV…ATAFKLIKEH (132 aa)). Residue E159 participates in DNA binding. DNA-binding residues include G232 and D234. D234 serves as a coordination point for Mg(2+). Residues 339-347 (VQGRLDGFF) are interaction with PCNA.

It belongs to the XPG/RAD2 endonuclease family. FEN1 subfamily. In terms of assembly, interacts with PCNA. Three molecules of RAD27 bind to one PCNA trimer with each molecule binding to one PCNA monomer. PCNA stimulates the nuclease activity without altering cleavage specificity. Mg(2+) is required as a cofactor. Post-translationally, phosphorylated. Phosphorylation upon DNA damage induces relocalization to the nuclear plasma.

It is found in the nucleus. The protein localises to the nucleolus. The protein resides in the nucleoplasm. It localises to the mitochondrion. Functionally, structure-specific nuclease with 5'-flap endonuclease and 5'-3' exonuclease activities involved in DNA replication and repair. During DNA replication, cleaves the 5'-overhanging flap structure that is generated by displacement synthesis when DNA polymerase encounters the 5'-end of a downstream Okazaki fragment. It enters the flap from the 5'-end and then tracks to cleave the flap base, leaving a nick for ligation. Also involved in the long patch base excision repair (LP-BER) pathway, by cleaving within the apurinic/apyrimidinic (AP) site-terminated flap. Acts as a genome stabilization factor that prevents flaps from equilibrating into structures that lead to duplications and deletions. Also possesses 5'-3' exonuclease activity on nicked or gapped double-stranded DNA, and exhibits RNase H activity. Also involved in replication and repair of rDNA and in repairing mitochondrial DNA. The chain is Flap endonuclease 1 from Candida dubliniensis (strain CD36 / ATCC MYA-646 / CBS 7987 / NCPF 3949 / NRRL Y-17841) (Yeast).